A 272-amino-acid chain; its full sequence is MSRAPDRIAACFDALRHSGRKALIPFITAGDPSLEATVPVMHALVRAGANIIELGVPFSDPMADGPTIQRSSERALGRGAGLAYVIEAVQEFRREDATTPVVLMGYLNPIEIHGTRRFAETAVAAGIDGVLLVDLPPEEADETRAIFTEVGLALIALASPTTGEARLDMLCSTAQGYLYYVSFSGVTGAADRLDTHAASDRLRQLRARAGAPVVAGFGIKDAASAAAMAVDADGVVVGSALVAALADASDVRSARERAEDFLQPLRQALDAG.

Residues Glu-53 and Asp-64 each act as proton acceptor in the active site.

It belongs to the TrpA family. As to quaternary structure, tetramer of two alpha and two beta chains.

The catalysed reaction is (1S,2R)-1-C-(indol-3-yl)glycerol 3-phosphate + L-serine = D-glyceraldehyde 3-phosphate + L-tryptophan + H2O. The protein operates within amino-acid biosynthesis; L-tryptophan biosynthesis; L-tryptophan from chorismate: step 5/5. Functionally, the alpha subunit is responsible for the aldol cleavage of indoleglycerol phosphate to indole and glyceraldehyde 3-phosphate. In Xanthomonas campestris pv. campestris (strain B100), this protein is Tryptophan synthase alpha chain.